Consider the following 150-residue polypeptide: Ribonuclease H (150 aa).

Residues 1–146 (MPELFAYTDG…ADELARAGMA (146 aa)) enclose the RNase H type-1 domain. 4 residues coordinate Mg(2+): Asp9, Glu52, Asp74, and Asp138.

This sequence belongs to the RNase H family. In terms of assembly, monomer. Mg(2+) serves as cofactor.

The protein localises to the cytoplasm. It catalyses the reaction Endonucleolytic cleavage to 5'-phosphomonoester.. In terms of biological role, endonuclease that specifically degrades the RNA of RNA-DNA hybrids. The sequence is that of Ribonuclease H from Roseobacter denitrificans (strain ATCC 33942 / OCh 114) (Erythrobacter sp. (strain OCh 114)).